Consider the following 426-residue polypeptide: Na(+)/H(+) antiporter 1 (426 aa).

Helical transmembrane passes span 1-21 (MELM…SLVA), 29-49 (IPDI…LQII), 57-77 (IFEY…AFTM), 95-115 (ITFL…LNLP), 120-140 (VGYL…IPVF), 158-178 (IFND…FGLF), 184-204 (LIDL…LAKI), 208-228 (IIIH…GAML), 236-256 (LLPS…IMGL), 286-306 (VFIF…NYFI), 309-329 (LLVA…LGLI), and 382-402 (IAGT…ILEA).

The protein belongs to the monovalent cation:proton antiporter 1 (CPA1) transporter (TC 2.A.36) family.

Its subcellular location is the cell membrane. This is a Na(+)/H(+) antiporter. Can also transport lithium. In Methanocaldococcus jannaschii (strain ATCC 43067 / DSM 2661 / JAL-1 / JCM 10045 / NBRC 100440) (Methanococcus jannaschii), this protein is Na(+)/H(+) antiporter 1.